Reading from the N-terminus, the 244-residue chain is MRKIYQRVLLKLSGEALMGSLGYGIDPAVVQGIAQEVAEVAATGIQIAIVVGGGNIFRGVKAASKGMDRATADYVGMIATVMNAITLQDALEQVGVPTRVQTAIAMQELAEPYIRRRAIRHLEKGRVVVFGAGSGNPFFTTDTTAALRAAEIEAEVIFKATKVDGVYDSDPHKNQEAKRYESLSYGEVLTLDLRVMDSTAIALCKENNIPIIVFNLSVSGNICKAVMGEKIGTIVGGFHESKRS.

11-14 provides a ligand contact to ATP; the sequence is KLSG. Positions 19-24 are involved in allosteric activation by GTP; that stretch reads GSLGYG. Gly-53 provides a ligand contact to UMP. ATP is bound by residues Gly-54 and Arg-58. Residues Asp-73 and 134–141 each bind UMP; that span reads SGNPFFTT. 3 residues coordinate ATP: Thr-161, Tyr-167, and Asp-170.

Belongs to the UMP kinase family. Homohexamer.

The protein resides in the cytoplasm. It catalyses the reaction UMP + ATP = UDP + ADP. Its pathway is pyrimidine metabolism; CTP biosynthesis via de novo pathway; UDP from UMP (UMPK route): step 1/1. Its activity is regulated as follows. Allosterically activated by GTP. Inhibited by UTP. Catalyzes the reversible phosphorylation of UMP to UDP. This chain is Uridylate kinase, found in Trichodesmium erythraeum (strain IMS101).